The sequence spans 800 residues: Elongation factor G, mitochondrial (800 aa).

The N-terminal 34 residues, 1 to 34, are a transit peptide targeting the mitochondrion; the sequence is MSVHTVMRTQVRSLAGMPKAAMRPLGNSFCARRY. Residues 99 to 385 form the tr-type G domain; that stretch reads SKVRNIGIAA…GICDYLPNPA (287 aa). GTP is bound by residues 108–115, 183–187, and 237–240; these read AHIDSGKT, DTPGH, and NKMD.

It belongs to the TRAFAC class translation factor GTPase superfamily. Classic translation factor GTPase family. EF-G/EF-2 subfamily.

Its subcellular location is the mitochondrion. Its pathway is protein biosynthesis; polypeptide chain elongation. Functionally, mitochondrial GTPase that catalyzes the GTP-dependent ribosomal translocation step during translation elongation. During this step, the ribosome changes from the pre-translocational (PRE) to the post-translocational (POST) state as the newly formed A-site-bound peptidyl-tRNA and P-site-bound deacylated tRNA move to the P and E sites, respectively. Catalyzes the coordinated movement of the two tRNA molecules, the mRNA and conformational changes in the ribosome. The protein is Elongation factor G, mitochondrial of Coccidioides immitis (strain RS) (Valley fever fungus).